The chain runs to 160 residues: Probable NADH dehydrogenase [ubiquinone] 1 beta subcomplex subunit 2, mitochondrial (160 aa).

The protein belongs to the complex I NDUFB2 subunit family. In terms of assembly, complex I is composed of 45 different subunits.

It is found in the mitochondrion inner membrane. Accessory subunit of the mitochondrial membrane respiratory chain NADH dehydrogenase (Complex I), that is believed not to be involved in catalysis. Complex I functions in the transfer of electrons from NADH to the respiratory chain. The immediate electron acceptor for the enzyme is believed to be ubiquinone. The polypeptide is Probable NADH dehydrogenase [ubiquinone] 1 beta subcomplex subunit 2, mitochondrial (Caenorhabditis briggsae).